Reading from the N-terminus, the 501-residue chain is DNA nucleotidylexotransferase (501 aa).

Positions 11–17 (KKRKRPV) match the Nuclear localization signal motif. Positions 24–121 (QVEVKFKEVT…RPVRVETRHS (98 aa)) constitute a BRCT domain. The tract at residues 249 to 253 (VGPKT) is involved in DNA binding. A 2'-deoxyribonucleoside 5'-triphosphate-binding positions include 324 to 329 (GFRRGK) and 333 to 336 (HDVD). D334, D336, and D426 together coordinate Mg(2+). Residue 441 to 442 (GW) participates in a 2'-deoxyribonucleoside 5'-triphosphate binding.

Belongs to the DNA polymerase type-X family. Mg(2+) is required as a cofactor.

It localises to the nucleus. The enzyme catalyses DNA(n) + a 2'-deoxyribonucleoside 5'-triphosphate = DNA(n+1) + diphosphate. Template-independent DNA polymerase which catalyzes the random addition of deoxynucleoside 5'-triphosphate to the 3'-end of a DNA initiator. One of the in vivo functions of this enzyme is the addition of nucleotides at the junction (N region) of rearranged Ig heavy chain and T-cell receptor gene segments during the maturation of B- and T-cells. The protein is DNA nucleotidylexotransferase (dntt) of Oncorhynchus mykiss (Rainbow trout).